We begin with the raw amino-acid sequence, 360 residues long: Aminomethyltransferase (360 aa).

Belongs to the GcvT family. As to quaternary structure, the glycine cleavage system is composed of four proteins: P, T, L and H.

It carries out the reaction N(6)-[(R)-S(8)-aminomethyldihydrolipoyl]-L-lysyl-[protein] + (6S)-5,6,7,8-tetrahydrofolate = N(6)-[(R)-dihydrolipoyl]-L-lysyl-[protein] + (6R)-5,10-methylene-5,6,7,8-tetrahydrofolate + NH4(+). In terms of biological role, the glycine cleavage system catalyzes the degradation of glycine. This is Aminomethyltransferase from Pseudomonas syringae pv. tomato (strain ATCC BAA-871 / DC3000).